The following is a 424-amino-acid chain: GTPase Obg (424 aa).

The Obg domain occupies 1–158; it reads MFIDTAKIFV…RWIKLELKLL (158 aa). Positions 159-331 constitute an OBG-type G domain; the sequence is ADVGLIGFPN…LMKEAARLLS (173 aa). GTP is bound by residues 165-172, 190-194, 212-215, 282-285, and 312-314; these read GFPNVGKS, FTTLK, DIPG, NKSD, and SAA. Positions 172 and 192 each coordinate Mg(2+). The OCT domain maps to 345–424; that stretch reads RFIEEEKRFT…LNDFEFDFLL (80 aa).

It belongs to the TRAFAC class OBG-HflX-like GTPase superfamily. OBG GTPase family. In terms of assembly, monomer. The cofactor is Mg(2+).

Its subcellular location is the cytoplasm. In terms of biological role, an essential GTPase which binds GTP, GDP and possibly (p)ppGpp with moderate affinity, with high nucleotide exchange rates and a fairly low GTP hydrolysis rate. Plays a role in control of the cell cycle, stress response, ribosome biogenesis and in those bacteria that undergo differentiation, in morphogenesis control. The polypeptide is GTPase Obg (Clostridium botulinum (strain ATCC 19397 / Type A)).